The following is a 706-amino-acid chain: Protein psiG (706 aa).

The first 23 residues, 1–23 (MKIILTLLIILFSLNKNLNFVSS), serve as a signal peptide directing secretion. The Extracellular segment spans residues 24-644 (EVTKSRICSI…FVCKPAAIIS (621 aa)). N-linked (GlcNAc...) asparagine glycans are attached at residues Asn-95, Asn-107, Asn-212, Asn-296, Asn-429, Asn-521, Asn-532, and Asn-616. Residues 109–253 (TLDKSSNIYS…SDYCGVCQGD (145 aa)) enclose the PA14 domain. The helical transmembrane segment at 645–665 (TSVIVGVSVAAAVVAIAIVVA) threads the bilayer. Residues 666–706 (SKKGYDAWAASNNNSLASLTSNPLYENPTGNGDNPMYQPNS) are Cytoplasmic-facing. Positions 687–706 (NPLYENPTGNGDNPMYQPNS) are disordered. Polar residues predominate over residues 693 to 706 (PTGNGDNPMYQPNS).

This sequence belongs to the prespore-cell-inducing factor family.

It is found in the membrane. The sequence is that of Protein psiG (psiG-1) from Dictyostelium discoideum (Social amoeba).